The primary structure comprises 300 residues: Acetyl-coenzyme A carboxylase carboxyl transferase subunit beta (300 aa).

In terms of domain architecture, CoA carboxyltransferase N-terminal spans 24-293 (LWTNCESCSQ…NAPGAALGGA (270 aa)). Residues C28, C31, C47, and C50 each contribute to the Zn(2+) site. The C4-type zinc finger occupies 28–50 (CESCSQMILVKDLQKAMNVCPHC).

The protein belongs to the AccD/PCCB family. Acetyl-CoA carboxylase is a heterohexamer composed of biotin carboxyl carrier protein (AccB), biotin carboxylase (AccC) and two subunits each of ACCase subunit alpha (AccA) and ACCase subunit beta (AccD). It depends on Zn(2+) as a cofactor.

It localises to the cytoplasm. The enzyme catalyses N(6)-carboxybiotinyl-L-lysyl-[protein] + acetyl-CoA = N(6)-biotinyl-L-lysyl-[protein] + malonyl-CoA. It functions in the pathway lipid metabolism; malonyl-CoA biosynthesis; malonyl-CoA from acetyl-CoA: step 1/1. Its function is as follows. Component of the acetyl coenzyme A carboxylase (ACC) complex. Biotin carboxylase (BC) catalyzes the carboxylation of biotin on its carrier protein (BCCP) and then the CO(2) group is transferred by the transcarboxylase to acetyl-CoA to form malonyl-CoA. In Gluconacetobacter diazotrophicus (strain ATCC 49037 / DSM 5601 / CCUG 37298 / CIP 103539 / LMG 7603 / PAl5), this protein is Acetyl-coenzyme A carboxylase carboxyl transferase subunit beta.